The following is a 107-amino-acid chain: Acidic phospholipase A2 2 (107 aa).

Intrachain disulfides connect C26/C100, C28/C38, C37/C82, C43/C107, C44/C75, and C62/C73. Positions 27, 29, and 31 each coordinate Ca(2+). Residue H41 is part of the active site. D42 is a Ca(2+) binding site. The active site involves D76.

Ca(2+) is required as a cofactor. As to expression, expressed by the venom gland.

Its subcellular location is the secreted. It catalyses the reaction a 1,2-diacyl-sn-glycero-3-phosphocholine + H2O = a 1-acyl-sn-glycero-3-phosphocholine + a fatty acid + H(+). Its function is as follows. PLA2 catalyzes the calcium-dependent hydrolysis of the 2-acyl groups in 3-sn-phosphoglycerides. The polypeptide is Acidic phospholipase A2 2 (Bothrops insularis (Golden lancehead)).